Here is a 479-residue protein sequence, read N- to C-terminus: Adenosylhomocysteinase (479 aa).

The substrate site is built by Thr-65, Asp-145, and Glu-205. 206–208 (TTT) provides a ligand contact to NAD(+). The substrate site is built by Lys-235 and Asp-239. Residues Asn-240, 269–274 (GYGDVG), Glu-292, Asn-327, 348–350 (IGH), and Asn-393 each bind NAD(+).

It belongs to the adenosylhomocysteinase family. The cofactor is NAD(+).

The protein localises to the cytoplasm. The enzyme catalyses S-adenosyl-L-homocysteine + H2O = L-homocysteine + adenosine. It functions in the pathway amino-acid biosynthesis; L-homocysteine biosynthesis; L-homocysteine from S-adenosyl-L-homocysteine: step 1/1. May play a key role in the regulation of the intracellular concentration of adenosylhomocysteine. The polypeptide is Adenosylhomocysteinase (Janthinobacterium sp. (strain Marseille) (Minibacterium massiliensis)).